A 178-amino-acid polypeptide reads, in one-letter code: UPF0228 protein MM_0401 (178 aa).

This sequence belongs to the UPF0228 family.

The sequence is that of UPF0228 protein MM_0401 from Methanosarcina mazei (strain ATCC BAA-159 / DSM 3647 / Goe1 / Go1 / JCM 11833 / OCM 88) (Methanosarcina frisia).